Reading from the N-terminus, the 466-residue chain is ATP synthase subunit beta (466 aa).

An ATP-binding site is contributed by 153 to 160 (GGAGVGKT).

The protein belongs to the ATPase alpha/beta chains family. As to quaternary structure, F-type ATPases have 2 components, CF(1) - the catalytic core - and CF(0) - the membrane proton channel. CF(1) has five subunits: alpha(3), beta(3), gamma(1), delta(1), epsilon(1). CF(0) has three main subunits: a(1), b(2) and c(9-12). The alpha and beta chains form an alternating ring which encloses part of the gamma chain. CF(1) is attached to CF(0) by a central stalk formed by the gamma and epsilon chains, while a peripheral stalk is formed by the delta and b chains.

The protein localises to the cell membrane. The enzyme catalyses ATP + H2O + 4 H(+)(in) = ADP + phosphate + 5 H(+)(out). Its function is as follows. Produces ATP from ADP in the presence of a proton gradient across the membrane. The catalytic sites are hosted primarily by the beta subunits. This is ATP synthase subunit beta from Clostridium acetobutylicum (strain ATCC 824 / DSM 792 / JCM 1419 / IAM 19013 / LMG 5710 / NBRC 13948 / NRRL B-527 / VKM B-1787 / 2291 / W).